A 73-amino-acid chain; its full sequence is Translation initiation factor IF-1 (73 aa).

Residues 1–73 enclose the S1-like domain; that stretch reads MDIKEEAIET…TKGRIVYREK (73 aa).

It belongs to the IF-1 family. In terms of assembly, component of the 30S ribosomal translation pre-initiation complex which assembles on the 30S ribosome in the order IF-2 and IF-3, IF-1 and N-formylmethionyl-tRNA(fMet); mRNA recruitment can occur at any time during PIC assembly.

It localises to the cytoplasm. In terms of biological role, one of the essential components for the initiation of protein synthesis. Stabilizes the binding of IF-2 and IF-3 on the 30S subunit to which N-formylmethionyl-tRNA(fMet) subsequently binds. Helps modulate mRNA selection, yielding the 30S pre-initiation complex (PIC). Upon addition of the 50S ribosomal subunit IF-1, IF-2 and IF-3 are released leaving the mature 70S translation initiation complex. This Borreliella afzelii (strain PKo) (Borrelia afzelii) protein is Translation initiation factor IF-1.